Consider the following 288-residue polypeptide: Energy-coupling factor transporter ATP-binding protein EcfA2 (288 aa).

The region spanning 3-246 (ITFDHVSFTY…PAWLKANQLG (244 aa)) is the ABC transporter domain. ATP is bound at residue 40–47 (GHTGSGKS). Residue glutamate 171 is the Proton acceptor of the active site.

It belongs to the ABC transporter superfamily. Energy-coupling factor EcfA family. In terms of assembly, forms a stable energy-coupling factor (ECF) transporter complex probably composed of 2 membrane-embedded substrate-binding proteins (S component), 2 ATP-binding proteins (A component) and 2 transmembrane proteins (T component). This complex interacts with a number of substrate-specific components, including FolT and ThiT for 5-formyltetrahydrofolate and thiamine respectively.

The protein localises to the cell membrane. Its function is as follows. ATP-binding (A) component of a common energy-coupling factor (ECF) ABC-transporter complex. Unlike classic ABC transporters this ECF transporter provides the energy necessary to transport a number of different substrates including 5-formyltetrahydrofolate and thiamine. Expression of the complex plus FolT or ThiT in Lactococcus lactis subsp. cremoris (strain NZ9000) allows 5-formyltetrahydrofolate or thiamine uptake respectively; 5-formyltetrahydrofolate or thiamine are not taken up in the absence of FolT/ThiT or the EcfA1A2T complex. Deenergized L.lactis subsp. cremoris (treated with 2-deoxyglucose) do not take up substrate. The protein is Energy-coupling factor transporter ATP-binding protein EcfA2 of Lacticaseibacillus paracasei (strain ATCC 334 / BCRC 17002 / CCUG 31169 / CIP 107868 / KCTC 3260 / NRRL B-441) (Lactobacillus paracasei).